Here is a 166-residue protein sequence, read N- to C-terminus: 2-amino-4-hydroxy-6-hydroxymethyldihydropteridine pyrophosphokinase (166 aa).

The protein belongs to the HPPK family.

The enzyme catalyses 6-hydroxymethyl-7,8-dihydropterin + ATP = (7,8-dihydropterin-6-yl)methyl diphosphate + AMP + H(+). The protein operates within cofactor biosynthesis; tetrahydrofolate biosynthesis; 2-amino-4-hydroxy-6-hydroxymethyl-7,8-dihydropteridine diphosphate from 7,8-dihydroneopterin triphosphate: step 4/4. Functionally, catalyzes the transfer of pyrophosphate from adenosine triphosphate (ATP) to 6-hydroxymethyl-7,8-dihydropterin, an enzymatic step in folate biosynthesis pathway. The chain is 2-amino-4-hydroxy-6-hydroxymethyldihydropteridine pyrophosphokinase (folK) from Streptococcus pyogenes serotype M6 (strain ATCC BAA-946 / MGAS10394).